The sequence spans 350 residues: tRNA uridine(34) hydroxylase (350 aa).

Positions 146-240 (DDPDAVFIDM…YARKAREQGL (95 aa)) constitute a Rhodanese domain. C200 (cysteine persulfide intermediate) is an active-site residue. The interval 314 to 350 (PEEEQRRRRAGRENGNKIFNKSRGRLNTQLGIPDPAE) is disordered. Basic and acidic residues predominate over residues 316–328 (EEQRRRRAGRENG).

Belongs to the TrhO family.

It catalyses the reaction uridine(34) in tRNA + AH2 + O2 = 5-hydroxyuridine(34) in tRNA + A + H2O. In terms of biological role, catalyzes oxygen-dependent 5-hydroxyuridine (ho5U) modification at position 34 in tRNAs. This Citrobacter koseri (strain ATCC BAA-895 / CDC 4225-83 / SGSC4696) protein is tRNA uridine(34) hydroxylase.